The following is a 504-amino-acid chain: Peroxisomal N(1)-acetyl-spermine/spermidine oxidase (504 aa).

FAD contacts are provided by residues Ala16, Glu37, Arg45, and 61–62; that span reads HW. The substrate site is built by His64 and Val187. Val240 provides a ligand contact to FAD. Asn313 lines the substrate pocket. FAD contacts are provided by residues Glu465 and 474-475; that span reads TT. The short motif at 502–504 is the Microbody targeting signal element; sequence PRL.

The protein belongs to the flavin monoamine oxidase family. As to quaternary structure, monomer. FAD is required as a cofactor. In terms of tissue distribution, widely expressed at different developmental stages. Expressed at high level in the liver and the stomach, expressed at lower level in heart, spleen, thymus, small intestine, muscle, pancreas, uterus, and breast and expressed at very low level in brain, kidney, lung, testis, skin, adrenal gland and prostate gland.

It localises to the peroxisome. Its subcellular location is the cytoplasm. It catalyses the reaction N(1)-acetylspermine + O2 + H2O = 3-acetamidopropanal + spermidine + H2O2. The catalysed reaction is N(1)-acetylspermidine + O2 + H2O = 3-acetamidopropanal + putrescine + H2O2. It carries out the reaction N(1),N(12)-diacetylspermine + O2 + H2O = 3-acetamidopropanal + N(1)-acetylspermidine + H2O2. The protein operates within amine and polyamine metabolism; spermine metabolism. Functionally, flavoenzyme which catalyzes the oxidation of N(1)-acetylspermine to spermidine and is thus involved in the polyamine back-conversion. Can also oxidize N(1)-acetylspermidine to putrescine. Substrate specificity: N(1)-acetylspermine = N(1)-acetylspermidine &gt; N(1),N(12)-diacylspermine &gt;&gt; spermine. Does not oxidize spermidine. Plays an important role in the regulation of polyamine intracellular concentration and has the potential to act as a determinant of cellular sensitivity to the antitumor polyamine analogs. This chain is Peroxisomal N(1)-acetyl-spermine/spermidine oxidase (Paox), found in Mus musculus (Mouse).